Reading from the N-terminus, the 59-residue chain is Large ribosomal subunit protein bL32c (59 aa).

A disordered region spans residues 1–20 (MAVPKKRTSKSKKRIRKSVW).

Belongs to the bacterial ribosomal protein bL32 family.

It localises to the plastid. It is found in the chloroplast. The chain is Large ribosomal subunit protein bL32c from Angiopteris evecta (Mule's foot fern).